The following is a 600-amino-acid chain: Elongation factor 4 (600 aa).

A tr-type G domain is found at 4–186; the sequence is KNVRNFCIIA…AIVNRIPPPK (183 aa). Residues 16 to 21 and 133 to 136 contribute to the GTP site; these read DHGKST and NKID.

Belongs to the TRAFAC class translation factor GTPase superfamily. Classic translation factor GTPase family. LepA subfamily.

It is found in the cell inner membrane. It carries out the reaction GTP + H2O = GDP + phosphate + H(+). Functionally, required for accurate and efficient protein synthesis under certain stress conditions. May act as a fidelity factor of the translation reaction, by catalyzing a one-codon backward translocation of tRNAs on improperly translocated ribosomes. Back-translocation proceeds from a post-translocation (POST) complex to a pre-translocation (PRE) complex, thus giving elongation factor G a second chance to translocate the tRNAs correctly. Binds to ribosomes in a GTP-dependent manner. The sequence is that of Elongation factor 4 from Aquifex aeolicus (strain VF5).